A 223-amino-acid polypeptide reads, in one-letter code: MTPTRAQLAAFVDHTLLKPEATAADVAALVTEAAELGVYAVCVSPTMVPAAVQAGAGVRVASVAGFPSGKHVSAVKAHEAALAVASGAAEIDMVIDVGAALAGDLDGVRADIAAVRDAVGGAVLKVIVESSALLALADEHTLVRVCRAAEDAGADFVKTSTGFHPTGGASVRAVALMAEAVGGRLGVKASGGIRTAADALAMLDAGATRLGLSGTRAVLDGLG.

Catalysis depends on aspartate 92, which acts as the Proton donor/acceptor. The Schiff-base intermediate with acetaldehyde role is filled by lysine 158. Lysine 188 functions as the Proton donor/acceptor in the catalytic mechanism.

The protein belongs to the DeoC/FbaB aldolase family. DeoC type 1 subfamily.

It is found in the cytoplasm. It catalyses the reaction 2-deoxy-D-ribose 5-phosphate = D-glyceraldehyde 3-phosphate + acetaldehyde. Its pathway is carbohydrate degradation; 2-deoxy-D-ribose 1-phosphate degradation; D-glyceraldehyde 3-phosphate and acetaldehyde from 2-deoxy-alpha-D-ribose 1-phosphate: step 2/2. Catalyzes a reversible aldol reaction between acetaldehyde and D-glyceraldehyde 3-phosphate to generate 2-deoxy-D-ribose 5-phosphate. The polypeptide is Deoxyribose-phosphate aldolase (Mycolicibacterium paratuberculosis (strain ATCC BAA-968 / K-10) (Mycobacterium paratuberculosis)).